We begin with the raw amino-acid sequence, 477 residues long: PTS system MurNAc-GlcNAc-specific EIIBC component (477 aa).

The PTS EIIB type-1 domain maps to 5 to 87 (QQLAHHILDA…VKLSGVQLGE (83 aa)). The active-site Phosphocysteine intermediate; for EIIB activity is the cysteine 27. The disordered stretch occupies residues 91–113 (HRSNTSNIKNQAQQNKREFQQKR). Positions 92–104 (RSNTSNIKNQAQQ) are enriched in polar residues. The region spanning 123 to 477 (KSIANIFIPL…EMRNLNKLGD (355 aa)) is the PTS EIIC type-1 domain. 10 consecutive transmembrane segments (helical) span residues 128-148 (IFIP…IAAV), 167-187 (VAVL…FTGF), 192-212 (VFGA…LTGI), 227-247 (LIAG…LSII), 267-287 (ISLL…AGFI), 298-318 (VIGV…LPLV), 342-362 (LLPI…ALWV), 377-397 (ALPV…TLPL), 401-421 (FITA…IGHI), and 443-463 (LGYI…TYFF).

The protein resides in the cell membrane. It carries out the reaction N-acetyl-beta-D-muramate-(1-&gt;4)-N-acetyl-D-glucosamine(out) + N(pros)-phospho-L-histidyl-[protein] = 6-phospho-N-acetyl-beta-D-muramate-(1-&gt;4)-N-acetyl-D-glucosamine(in) + L-histidyl-[protein]. The protein operates within cell wall biogenesis; peptidoglycan recycling. Functionally, the phosphoenolpyruvate-dependent sugar phosphotransferase system (sugar PTS), a major carbohydrate active transport system, catalyzes the phosphorylation of incoming sugar substrates concomitantly with their translocation across the cell membrane. This system is involved in the uptake and phosphorylation of MurNAc-GlcNAc, the principle peptidoglycan turnover product of S.aureus, yielding cytoplasmic MurNAc 6P-GlcNAc. The chain is PTS system MurNAc-GlcNAc-specific EIIBC component from Staphylococcus haemolyticus (strain JCSC1435).